The chain runs to 154 residues: dCTP deaminase (154 aa).

Residues 79-84, aspartate 95, glutamine 124, and tyrosine 138 each bind dCTP; that span reads RSSLAR.

The protein belongs to the dCTP deaminase family. As to quaternary structure, homotrimer.

The enzyme catalyses dCTP + H2O + H(+) = dUTP + NH4(+). It functions in the pathway pyrimidine metabolism; dUMP biosynthesis; dUMP from dCTP (dUTP route): step 1/2. Catalyzes the deamination of dCTP to dUTP. In Pyrococcus abyssi (strain GE5 / Orsay), this protein is dCTP deaminase.